The chain runs to 363 residues: uncharacterized protein (363 aa).

Q198, Y225, E246, and D291 together coordinate S-adenosyl-L-methionine. The active-site Nucleophile is the C318.

Belongs to the class I-like SAM-binding methyltransferase superfamily. RNA M5U methyltransferase family.

This is an uncharacterized protein from Mycoplasma mobile (strain ATCC 43663 / 163K / NCTC 11711) (Mesomycoplasma mobile).